The chain runs to 178 residues: Oligoribonuclease (178 aa).

Residues 7–168 (LIWIDLEMTG…DDIRESIAEL (162 aa)) enclose the Exonuclease domain. Residue tyrosine 128 is part of the active site.

It belongs to the oligoribonuclease family.

It is found in the cytoplasm. Functionally, 3'-to-5' exoribonuclease specific for small oligoribonucleotides. In Francisella tularensis subsp. tularensis (strain FSC 198), this protein is Oligoribonuclease.